The primary structure comprises 322 residues: Quinolinate synthase (322 aa).

The iminosuccinate site is built by H36 and S53. C98 contributes to the [4Fe-4S] cluster binding site. Iminosuccinate-binding positions include 124–126 (YIN) and S141. C184 is a [4Fe-4S] cluster binding site. Iminosuccinate-binding positions include 210–212 (HPE) and T227. Residue C278 coordinates [4Fe-4S] cluster.

Belongs to the quinolinate synthase family. Type 2 subfamily. [4Fe-4S] cluster serves as cofactor.

The protein localises to the cytoplasm. The enzyme catalyses iminosuccinate + dihydroxyacetone phosphate = quinolinate + phosphate + 2 H2O + H(+). It participates in cofactor biosynthesis; NAD(+) biosynthesis; quinolinate from iminoaspartate: step 1/1. In terms of biological role, catalyzes the condensation of iminoaspartate with dihydroxyacetone phosphate to form quinolinate. In Chloroherpeton thalassium (strain ATCC 35110 / GB-78), this protein is Quinolinate synthase.